A 355-amino-acid polypeptide reads, in one-letter code: Peptide chain release factor 1 (355 aa).

Glutamine 231 bears the N5-methylglutamine mark. Basic and acidic residues predominate over residues 280 to 293; the sequence is KERKAKEQSERKDQ. The disordered stretch occupies residues 280–307; the sequence is KERKAKEQSERKDQVGTGDRSGRIRTYN.

Belongs to the prokaryotic/mitochondrial release factor family. Methylated by PrmC. Methylation increases the termination efficiency of RF1.

The protein localises to the cytoplasm. Functionally, peptide chain release factor 1 directs the termination of translation in response to the peptide chain termination codons UAG and UAA. The protein is Peptide chain release factor 1 of Campylobacter hominis (strain ATCC BAA-381 / DSM 21671 / CCUG 45161 / LMG 19568 / NCTC 13146 / CH001A).